We begin with the raw amino-acid sequence, 484 residues long: Secreted RxLR effector protein 104 (484 aa).

An N-terminal signal peptide occupies residues 1–24 (MRSAYPVLTALLVVASSQIAAGSG). Residues 48-65 (RFLRGSRDVHNNVANEER) carry the RxLR-dEER motif. N-linked (GlcNAc...) asparagine glycosylation occurs at asparagine 175. Residues 324 to 463 (ENPKGQSPYP…SSSVLTPEDV (140 aa)) are disordered. Over residues 327 to 346 (KGQSPYPSTPLTAASTSKGG) the composition is skewed to polar residues. Over residues 402 to 413 (SSSSGPSRAFAP) the composition is skewed to low complexity. A compositionally biased stretch (polar residues) spans 418–428 (DQTFITENSRL).

This sequence belongs to the RxLR effector family.

Its subcellular location is the secreted. It localises to the host nucleus. Its function is as follows. Secreted effector that completely suppresses the host cell death induced by cell death-inducing proteins. The sequence is that of Secreted RxLR effector protein 104 from Plasmopara viticola (Downy mildew of grapevine).